The following is a 321-amino-acid chain: G-protein coupled receptor aex-2 (321 aa).

Topologically, residues methionine 1–alanine 24 are extracellular. N-linked (GlcNAc...) asparagine glycans are attached at residues asparagine 2, asparagine 9, and asparagine 17. The helical transmembrane segment at phenylalanine 25–leucine 45 threads the bilayer. Over threonine 46 to arginine 55 the chain is Cytoplasmic. Residues glutamine 56–threonine 76 traverse the membrane as a helical segment. Over arginine 77 to proline 90 the chain is Extracellular. A disulfide bridge links cysteine 88 with cysteine 161. A helical membrane pass occupies residues tyrosine 91 to valine 111. Residues aspartate 112 to leucine 132 are Cytoplasmic-facing. Residues leucine 133–phenylalanine 153 form a helical membrane-spanning segment. Residues leucine 154–proline 175 lie on the Extracellular side of the membrane. Residues isoleucine 176–alanine 196 traverse the membrane as a helical segment. Residues histidine 197 to threonine 221 are Cytoplasmic-facing. The chain crosses the membrane as a helical span at residues leucine 222–glycine 242. The Extracellular portion of the chain corresponds to glutamate 243 to alanine 254. Residues threonine 255–tryptophan 275 form a helical membrane-spanning segment. Residues threonine 276–methionine 321 lie on the Cytoplasmic side of the membrane.

The protein belongs to the G-protein coupled receptor 1 family. In terms of tissue distribution, expressed in the intestinal muscle, anal depressor, AVL and DVB GABAergic neurons, enteric muscles, the nerve ring, the ventral nerve cord and head mesodermal cells.

Its subcellular location is the cell membrane. The protein localises to the cell projection. The protein resides in the cilium. G-protein coupled receptor for the nlp-40 neuropeptide. The activity of this receptor is mediated by G proteins which activate adenylyl cyclase. Plays a role in the defecation motor program, which is a coordinated series of three muscle contractions that occurs every 45 seconds. Specifically, acts in GABAergic neurons, such as AVL and DVB, to control the expulsion step of defecation. Required for fatty acid uptake and metabolism by intestinal cells and therefore regulates the levels of triglycerides in the intestine. The sequence is that of G-protein coupled receptor aex-2 from Caenorhabditis elegans.